The following is a 444-amino-acid chain: Flagellum-specific ATP synthase (444 aa).

164-171 (AGSGVGKS) contributes to the ATP binding site.

It belongs to the ATPase alpha/beta chains family.

The protein localises to the cytoplasm. It catalyses the reaction ATP + H2O + 4 H(+)(in) = ADP + phosphate + 5 H(+)(out). Its function is as follows. Probable catalytic subunit of a protein translocase for flagellum-specific export, or a proton translocase involved in local circuits at the flagellum. The protein is Flagellum-specific ATP synthase (fliI) of Caulobacter vibrioides (strain ATCC 19089 / CIP 103742 / CB 15) (Caulobacter crescentus).